A 610-amino-acid polypeptide reads, in one-letter code: Glutamine--fructose-6-phosphate aminotransferase [isomerizing] (610 aa).

C2 (nucleophile; for GATase activity) is an active-site residue. Positions 2–218 (CGIVGAVAQR…EGDVAEITRR (217 aa)) constitute a Glutamine amidotransferase type-2 domain. SIS domains follow at residues 286–426 (AVEI…QQNR) and 459–600 (LAPD…VDQP). The active-site For Fru-6P isomerization activity is the K605.

As to quaternary structure, homodimer.

It is found in the cytoplasm. It catalyses the reaction D-fructose 6-phosphate + L-glutamine = D-glucosamine 6-phosphate + L-glutamate. Its function is as follows. Catalyzes the first step in hexosamine metabolism, converting fructose-6P into glucosamine-6P using glutamine as a nitrogen source. The sequence is that of Glutamine--fructose-6-phosphate aminotransferase [isomerizing] from Aliivibrio fischeri (strain ATCC 700601 / ES114) (Vibrio fischeri).